Reading from the N-terminus, the 220-residue chain is pH-response regulator palI/RIM9 homolog 1 (220 aa).

The Cytoplasmic portion of the chain corresponds to 1–5 (MSHFK). Residues 6–26 (IVFLTSLSLALVFELFNTISV) traverse the membrane as a helical segment. Residues 27–89 (PITSHLFISE…NHAKYALSKL (63 aa)) are Extracellular-facing. A helical transmembrane segment spans residues 90–110 (LLVHVLSFVCVLVFWLFAILI). Residues 111–121 (CIKWLNTSKSV) are Cytoplasmic-facing. The helical transmembrane segment at 122-142 (LLFAVGWSMVTFMVSLLGFLI) threads the bilayer. Residues 143-155 (DVLMFASHVTWSS) are Extracellular-facing. The chain crosses the membrane as a helical span at residues 156-176 (WLMLVSAFFVALSGILLCLMI). The Cytoplasmic segment spans residues 177–220 (RDLSYRRFVKLQGEVDVCVPMTEPRDPDELNEIWKKKTSKREIL).

The protein belongs to the palI/RIM9 family.

It is found in the cell membrane. Its function is as follows. Required for the proteolytic cleavage of the transcription factor RIM101 in response to alkaline ambient pH. This chain is pH-response regulator palI/RIM9 homolog 1, found in Kluyveromyces lactis (strain ATCC 8585 / CBS 2359 / DSM 70799 / NBRC 1267 / NRRL Y-1140 / WM37) (Yeast).